The sequence spans 430 residues: Adenylosuccinate synthetase (430 aa).

GTP is bound by residues 12–18 and 40–42; these read GDEGKGK and GHT. Residue D13 is the Proton acceptor of the active site. Residues D13 and G40 each coordinate Mg(2+). Residues 13–16, 38–41, T130, R144, Q224, T239, and R303 each bind IMP; these read DEGK and NAGH. The active-site Proton donor is H41. A substrate-binding site is contributed by 299-305; it reads TVTGRKR. GTP-binding positions include R305, 331–333, and 413–415; these read KLD and STS.

Belongs to the adenylosuccinate synthetase family. As to quaternary structure, homodimer. Mg(2+) serves as cofactor.

It localises to the cytoplasm. It catalyses the reaction IMP + L-aspartate + GTP = N(6)-(1,2-dicarboxyethyl)-AMP + GDP + phosphate + 2 H(+). It participates in purine metabolism; AMP biosynthesis via de novo pathway; AMP from IMP: step 1/2. Plays an important role in the de novo pathway of purine nucleotide biosynthesis. Catalyzes the first committed step in the biosynthesis of AMP from IMP. This chain is Adenylosuccinate synthetase, found in Cereibacter sphaeroides (strain KD131 / KCTC 12085) (Rhodobacter sphaeroides).